A 279-amino-acid chain; its full sequence is Putative methyltransferase Jann_4284 (279 aa).

The sequence is that of Putative methyltransferase Jann_4284 from Jannaschia sp. (strain CCS1).